A 469-amino-acid chain; its full sequence is Aspartyl/glutamyl-tRNA(Asn/Gln) amidotransferase subunit B (469 aa).

It belongs to the GatB/GatE family. GatB subfamily. Heterotrimer of A, B and C subunits.

It carries out the reaction L-glutamyl-tRNA(Gln) + L-glutamine + ATP + H2O = L-glutaminyl-tRNA(Gln) + L-glutamate + ADP + phosphate + H(+). It catalyses the reaction L-aspartyl-tRNA(Asn) + L-glutamine + ATP + H2O = L-asparaginyl-tRNA(Asn) + L-glutamate + ADP + phosphate + 2 H(+). In terms of biological role, allows the formation of correctly charged Asn-tRNA(Asn) or Gln-tRNA(Gln) through the transamidation of misacylated Asp-tRNA(Asn) or Glu-tRNA(Gln) in organisms which lack either or both of asparaginyl-tRNA or glutaminyl-tRNA synthetases. The reaction takes place in the presence of glutamine and ATP through an activated phospho-Asp-tRNA(Asn) or phospho-Glu-tRNA(Gln). The sequence is that of Aspartyl/glutamyl-tRNA(Asn/Gln) amidotransferase subunit B from Methanococcus aeolicus (strain ATCC BAA-1280 / DSM 17508 / OCM 812 / Nankai-3).